We begin with the raw amino-acid sequence, 1159 residues long: Syntaxin-binding protein 5-like (1159 aa).

Residues 1–37 (MKKFRKVLDGLTTSSPVNPGGSPGCGSAAGTPSAAPT) are disordered. The segment covering 25-37 (CGSAAGTPSAAPT) has biased composition (low complexity). WD repeat units follow at residues 67–108 (TALA…CHSQ), 115–154 (VLQM…SLKF), 159–195 (ITFC…GYVI), 214–248 (HLSD…DFRI), 254–286 (IHSV…TAKP), 307–350 (PILK…KAIT), 358–392 (IVDF…VVDL), 414–491 (TCTA…YKLK), 519–628 (QMIS…ELVV), and 642–703 (TCLD…STSG). Disordered regions lie at residues 571–604 (SDTE…SVRD) and 690–770 (LTRS…KAQS). Polar residues-rich tracts occupy residues 699-713 (QSTS…NQVS) and 721-739 (SPTS…SQPC). WD repeat units lie at residues 808-865 (VTTL…TGTV), 874-946 (RFGF…QACL), 951-995 (ITES…LDVS), and 1009-1032 (CFTN…TYSQ). Residues 1094-1154 (GIEGMKAAAG…HELMLKCKDK (61 aa)) form the v-SNARE coiled-coil homology domain.

Belongs to the WD repeat L(2)GL family.

It localises to the cytoplasm. The protein resides in the cell membrane. The protein localises to the membrane. Functionally, may play a role in vesicle trafficking and exocytosis. The sequence is that of Syntaxin-binding protein 5-like (stxbp5l) from Danio rerio (Zebrafish).